Reading from the N-terminus, the 204-residue chain is Holliday junction branch migration complex subunit RuvA (204 aa).

Residues 1 to 67 (MIAFLSGHLV…ETELVLYGFG (67 aa)) form a domain I region. The segment at 68 to 146 (SPAERDVFVE…HWRQGLENAD (79 aa)) is domain II. The interval 147–156 (RPLAGGPPPA) is flexible linker. A domain III region spans residues 156 to 204 (AIREEVEMALLALGYSLQEIQAALQALPSQPRPTEEWLRDAITYLSRQP).

This sequence belongs to the RuvA family. Homotetramer. Forms an RuvA(8)-RuvB(12)-Holliday junction (HJ) complex. HJ DNA is sandwiched between 2 RuvA tetramers; dsDNA enters through RuvA and exits via RuvB. An RuvB hexamer assembles on each DNA strand where it exits the tetramer. Each RuvB hexamer is contacted by two RuvA subunits (via domain III) on 2 adjacent RuvB subunits; this complex drives branch migration. In the full resolvosome a probable DNA-RuvA(4)-RuvB(12)-RuvC(2) complex forms which resolves the HJ.

Its subcellular location is the cytoplasm. Functionally, the RuvA-RuvB-RuvC complex processes Holliday junction (HJ) DNA during genetic recombination and DNA repair, while the RuvA-RuvB complex plays an important role in the rescue of blocked DNA replication forks via replication fork reversal (RFR). RuvA specifically binds to HJ cruciform DNA, conferring on it an open structure. The RuvB hexamer acts as an ATP-dependent pump, pulling dsDNA into and through the RuvAB complex. HJ branch migration allows RuvC to scan DNA until it finds its consensus sequence, where it cleaves and resolves the cruciform DNA. The sequence is that of Holliday junction branch migration complex subunit RuvA from Synechococcus sp. (strain JA-3-3Ab) (Cyanobacteria bacterium Yellowstone A-Prime).